Here is a 63-residue protein sequence, read N- to C-terminus: 2-hydroxymuconate tautomerase (63 aa).

Catalysis depends on P2, which acts as the Proton acceptor; via imino nitrogen.

Belongs to the 4-oxalocrotonate tautomerase family. As to quaternary structure, homohexamer.

It catalyses the reaction (2Z,4E)-2-hydroxyhexa-2,4-dienedioate = (3E)-2-oxohex-3-enedioate. It participates in xenobiotic degradation; toluene degradation. Catalyzes the ketonization of 2-hydroxymuconate stereoselectively to yield 2-oxo-3-hexenedioate. This Pseudomonas sp. (strain CF600) protein is 2-hydroxymuconate tautomerase (dmpI).